The chain runs to 331 residues: Fructose-1,6-bisphosphatase class 1 2 (331 aa).

E91, D112, L114, and D115 together coordinate Mg(2+). Substrate is bound by residues D115 to S118, N207, Y238, and K268. Position 274 (E274) interacts with Mg(2+).

It belongs to the FBPase class 1 family. Homotetramer. Requires Mg(2+) as cofactor.

Its subcellular location is the cytoplasm. The enzyme catalyses beta-D-fructose 1,6-bisphosphate + H2O = beta-D-fructose 6-phosphate + phosphate. It functions in the pathway carbohydrate biosynthesis; Calvin cycle. The polypeptide is Fructose-1,6-bisphosphatase class 1 2 (Acaryochloris marina (strain MBIC 11017)).